We begin with the raw amino-acid sequence, 331 residues long: UPF0329 protein ECU01_0080/ECU01_1530/ECU02_1560/ECU04_0090/ECU08_0010/ECU08_2090 (331 aa).

Residues 305-320 (QRSEMEKRDREQDPER) are compositionally biased toward basic and acidic residues. The tract at residues 305–331 (QRSEMEKRDREQDPERRRLRARRVGSL) is disordered. Basic residues predominate over residues 321-331 (RRLRARRVGSL).

Belongs to the UPF0329 family.

This Encephalitozoon cuniculi (strain GB-M1) (Microsporidian parasite) protein is UPF0329 protein ECU01_0080/ECU01_1530/ECU02_1560/ECU04_0090/ECU08_0010/ECU08_2090.